We begin with the raw amino-acid sequence, 58 residues long: Large ribosomal subunit protein bL32 (58 aa).

This sequence belongs to the bacterial ribosomal protein bL32 family.

This chain is Large ribosomal subunit protein bL32, found in Prochlorococcus marinus (strain MIT 9303).